We begin with the raw amino-acid sequence, 295 residues long: Glutamyl-Q tRNA(Asp) synthetase (295 aa).

L-glutamate contacts are provided by residues 5-9 (RFAPS) and E41. The 'HIGH' region motif lies at 8–18 (PSPTGLLHIGS). 4 residues coordinate Zn(2+): C97, C99, Y117, and C121. Y178 and R196 together coordinate L-glutamate. Positions 234 to 238 (KWSKQ) match the 'KMSKS' region motif. Residue K237 coordinates ATP.

The protein belongs to the class-I aminoacyl-tRNA synthetase family. GluQ subfamily. Zn(2+) is required as a cofactor.

Its function is as follows. Catalyzes the tRNA-independent activation of glutamate in presence of ATP and the subsequent transfer of glutamate onto a tRNA(Asp). Glutamate is transferred on the 2-amino-5-(4,5-dihydroxy-2-cyclopenten-1-yl) moiety of the queuosine in the wobble position of the QUC anticodon. This is Glutamyl-Q tRNA(Asp) synthetase from Neisseria meningitidis serogroup B (strain ATCC BAA-335 / MC58).